Reading from the N-terminus, the 192-residue chain is Small ribosomal subunit protein bS16 (192 aa).

The interval 153-192 (AEAKAKAEAEAAAAAEEAAETEETPVEAAAEEAPAAESAE) is disordered. Positions 178 to 192 (VEAAAEEAPAAESAE) are enriched in low complexity.

It belongs to the bacterial ribosomal protein bS16 family.

The polypeptide is Small ribosomal subunit protein bS16 (Porphyromonas gingivalis (strain ATCC BAA-308 / W83)).